The following is a 284-amino-acid chain: Bifunctional protein FolD (284 aa).

Residues 164 to 166 (GRG), Thr-189, and Ile-230 each bind NADP(+).

It belongs to the tetrahydrofolate dehydrogenase/cyclohydrolase family. In terms of assembly, homodimer.

The catalysed reaction is (6R)-5,10-methylene-5,6,7,8-tetrahydrofolate + NADP(+) = (6R)-5,10-methenyltetrahydrofolate + NADPH. It catalyses the reaction (6R)-5,10-methenyltetrahydrofolate + H2O = (6R)-10-formyltetrahydrofolate + H(+). It participates in one-carbon metabolism; tetrahydrofolate interconversion. Functionally, catalyzes the oxidation of 5,10-methylenetetrahydrofolate to 5,10-methenyltetrahydrofolate and then the hydrolysis of 5,10-methenyltetrahydrofolate to 10-formyltetrahydrofolate. This chain is Bifunctional protein FolD, found in Pelotomaculum thermopropionicum (strain DSM 13744 / JCM 10971 / SI).